Reading from the N-terminus, the 179-residue chain is ATP synthase subunit b (179 aa).

Residues 23–43 (IFWLIITFGILYVVLSKLILP) traverse the membrane as a helical segment.

The protein belongs to the ATPase B chain family. F-type ATPases have 2 components, F(1) - the catalytic core - and F(0) - the membrane proton channel. F(1) has five subunits: alpha(3), beta(3), gamma(1), delta(1), epsilon(1). F(0) has three main subunits: a(1), b(2) and c(10-14). The alpha and beta chains form an alternating ring which encloses part of the gamma chain. F(1) is attached to F(0) by a central stalk formed by the gamma and epsilon chains, while a peripheral stalk is formed by the delta and b chains.

Its subcellular location is the cell inner membrane. Its function is as follows. F(1)F(0) ATP synthase produces ATP from ADP in the presence of a proton or sodium gradient. F-type ATPases consist of two structural domains, F(1) containing the extramembraneous catalytic core and F(0) containing the membrane proton channel, linked together by a central stalk and a peripheral stalk. During catalysis, ATP synthesis in the catalytic domain of F(1) is coupled via a rotary mechanism of the central stalk subunits to proton translocation. Functionally, component of the F(0) channel, it forms part of the peripheral stalk, linking F(1) to F(0). This chain is ATP synthase subunit b, found in Pelagibacter ubique (strain HTCC1062).